Consider the following 127-residue polypeptide: Probable toxin y4kH (127 aa).

It belongs to the MbcT/ParT/Res family.

Functionally, probable toxic component of a type II toxin-antitoxin (TA) system. It is not known which gene encodes its antitoxin. This is Probable toxin y4kH from Sinorhizobium fredii (strain NBRC 101917 / NGR234).